Reading from the N-terminus, the 80-residue chain is Beta-toxin KAaH1 (80 aa).

Residues 1-22 (MMKLMLFSIIVILFSLIGSIHG) form the signal peptide. In terms of domain architecture, LCN-type CS-alpha/beta spans 25–80 (VPGNYPLDSSDDTYLCAPLGENPFCIKICRKHGVKYGYCYAFQCWCEYLEDKNVKI). Intrachain disulfides connect C40-C63, C49-C68, and C53-C70.

The protein belongs to the long (3 C-C) scorpion toxin superfamily. Sodium/Potassium channel inhibitor family. As to expression, expressed by the venom gland.

The protein localises to the secreted. In terms of biological role, inhibits the vertebrate potassium channels Kv1.1/KCNA1 and Kv1.3/KCNA3 in vitro with an IC(50) of 5.3 nM and 50.0 nM respectively. The sequence is that of Beta-toxin KAaH1 from Androctonus australis (Sahara scorpion).